The primary structure comprises 222 residues: MGTSDYLARMRVEYGSVEKDGSSDLDVDWLGPDPATGWVTLLHQWMAEAEQAGAAEPNAMVVATVDDRGRPVTRTVLCKSVDASGVSFYTNYDSEKGRQLAAAPYASATFPWYLVGRQVHVHGAVTKVSAEETADYWSKRPRGSQLGAWASQQSLPIASRAALMQQLTEVTERFADVEEIPVPPHWGGYLIAAEVVEFWQGRENRVHNRIRVCGGQVERLQP.

Substrate-binding positions include Arg11–Tyr14 and Lys79. FMN-binding positions include Arg74–Lys79, Tyr89–Thr90, Lys96, and Gln118. Substrate is bound by residues Tyr136, Arg140, and Ser144. Residues Gln153–Ser154 and Trp199 each bind FMN. Residue Arg205–His207 participates in substrate binding. Residue Arg209 coordinates FMN.

It belongs to the pyridoxamine 5'-phosphate oxidase family. In terms of assembly, homodimer. It depends on FMN as a cofactor.

It carries out the reaction pyridoxamine 5'-phosphate + O2 + H2O = pyridoxal 5'-phosphate + H2O2 + NH4(+). The enzyme catalyses pyridoxine 5'-phosphate + O2 = pyridoxal 5'-phosphate + H2O2. Its pathway is cofactor metabolism; pyridoxal 5'-phosphate salvage; pyridoxal 5'-phosphate from pyridoxamine 5'-phosphate: step 1/1. It functions in the pathway cofactor metabolism; pyridoxal 5'-phosphate salvage; pyridoxal 5'-phosphate from pyridoxine 5'-phosphate: step 1/1. Catalyzes the oxidation of either pyridoxine 5'-phosphate (PNP) or pyridoxamine 5'-phosphate (PMP) into pyridoxal 5'-phosphate (PLP). The chain is Pyridoxine/pyridoxamine 5'-phosphate oxidase from Mycolicibacterium vanbaalenii (strain DSM 7251 / JCM 13017 / BCRC 16820 / KCTC 9966 / NRRL B-24157 / PYR-1) (Mycobacterium vanbaalenii).